Here is a 759-residue protein sequence, read N- to C-terminus: MSKRLRSNDVCADCSGPDPSWASVNRGTLICDECCSVHRSLGRHISQVRHLKHTPWPPTLLQMVETLYSNGANSIWEHSLLDPASVMSGRRKANPQDKVHPNKAEFIRAKYQMLAFVHRLPCRDDDSVTAKDLSKQLHSSVRTGNLETCLRLLSLGAQANFFHPEKGSTPLHVASKAGQILQAELLAVYGADPGTHDSSGKTPVDYARQGGHRELAERLVEIQYELTDRLAFYLCGRKPDHKNGQHFIIPQMADSSLDLSELAKAAKKKLQSLSNHLFEELAMDVYDEVDRRETDAVWLATQNHSTLVTETTVVPFLPVNPEYSSTRNQGRQKLARFNAHEFATLVIDILSDAKRRQQGSPLSRSKDNVELILRTVSNQHSTESQDNDQPDYDSVASDEDTDVETRASRTNRQKSLDSDLSDGPVTVQEFMEVKHALVASEAKRQQLMKVNNNLSGELRIMQKKLQTLQSENSSLRRQATASACQVQTASDHKDTVSHSSLKRRPSARGSRPMSMYETGSGQKPYLPMGEANHPEESRTRLQPFPTHIGRSALVTSSSSLPSFPSTLSWSRDESTRRASRLEKQNSTPESDYDNTAYDPEPDDTVSGRKGRQRSMLWQGDGPLPDTAEPHAVPSPALPSTEDVIRKTEQITKNIQELLRAAQENKHDSYIPCSERIHAAVTEMAALFPKKPKSDTVRTSLRLLTASAYRLQSECRKALPGDSSLPTDVQLVTQQVIQCAYDIAKAAKQLVTITTKENSS.

One can recognise an Arf-GAP domain in the interval 1–124 (MSKRLRSNDV…AFVHRLPCRD (124 aa)). The segment at 11–34 (CADCSGPDPSWASVNRGTLICDEC) adopts a C4-type zinc-finger fold. 3 ANK repeats span residues 132-161 (DLSK…QANF), 166-198 (KGST…THDS), and 199-228 (SGKT…ELTD). 2 disordered regions span residues 376 to 422 (VSNQ…DLSD) and 469 to 641 (QSEN…PSTE). The segment covering 385 to 402 (QDNDQPDYDSVASDEDTD) has biased composition (acidic residues). Residues 451 to 478 (NNNLSGELRIMQKKLQTLQSENSSLRRQ) are a coiled coil. Residues 469 to 489 (QSENSSLRRQATASACQVQTA) are compositionally biased toward polar residues. Residues 555-569 (TSSSSLPSFPSTLSW) show a composition bias toward low complexity. Residues 570-583 (SRDESTRRASRLEK) are compositionally biased toward basic and acidic residues.

May form heterooligomers with GIT1. Directly interacts with protein Piccolo/PCLO. Interacts with PPFIA1 and PPFIA2. Interacts with ARHGEF7. Identified in a complex with ARHGEF6 and BIN2. Interacts with PAK3. Interacts with PXN/paxillin. Interacts with TGFB1I1. Forms a complex with EFNB1 and GRB4/NCK2.

Functionally, GTPase-activating protein for ADP ribosylation factor family members, including ARF1. The chain is ARF GTPase-activating protein GIT2 (Git2) from Rattus norvegicus (Rat).